Reading from the N-terminus, the 144-residue chain is Snake venom vascular endothelial growth factor toxin cratrin (144 aa).

The N-terminal stretch at 1–24 (MAVYLLAVAILFCIQGWPSGTVQG) is a signal peptide. At Gln25 the chain carries Pyrrolidone carboxylic acid. 3 cysteine pairs are disulfide-bonded: Cys38/Cys80, Cys69/Cys115, and Cys73/Cys117. Residues 119-144 (PRSTVNNGKRKKNPKEGEPRAKFPLV) form a disordered region. The segment covering 132 to 144 (PKEGEPRAKFPLV) has biased composition (basic and acidic residues).

This sequence belongs to the PDGF/VEGF growth factor family. Snake venom VEGF subfamily. As to quaternary structure, homodimer; disulfide-linked. Interacts with VEGF receptor-1 (FLT1) with a high affinity, whereas it binds to VEGF receptor-2 (KDR) with a low affinity. Does not bind VEGF receptor-3 (FLT4). As to expression, expressed by the venom gland.

The protein localises to the secreted. Its function is as follows. Snake venom VEGFs that may contribute to venom dispersion and prey subjugation by inducing vascular permeability and hypotension. This protein induces an increase in capillary permeability after intradermal injection, as well as a drastic hypotensive effect after intravenous injection. The hypotension is mediated by nitric oxide (NO), which is produced by VEGF-activated endothelium NO synthase. Also induces angiogenesis in vitro. Like other crotalid VEGFs, this protein interacts with VEGF receptor-1 (FLT1) with a high affinity, whereas it binds to VEGF receptor-2 (KDR) with a low affinity. The sequence is that of Snake venom vascular endothelial growth factor toxin cratrin from Crotalus atrox (Western diamondback rattlesnake).